We begin with the raw amino-acid sequence, 204 residues long: Large ribosomal subunit protein uL4 (204 aa).

A disordered region spans residues 49–75 (TKGRSDVSGGGKKPWRQKGRGGARAGS).

It belongs to the universal ribosomal protein uL4 family. As to quaternary structure, part of the 50S ribosomal subunit.

Functionally, one of the primary rRNA binding proteins, this protein initially binds near the 5'-end of the 23S rRNA. It is important during the early stages of 50S assembly. It makes multiple contacts with different domains of the 23S rRNA in the assembled 50S subunit and ribosome. In terms of biological role, forms part of the polypeptide exit tunnel. The protein is Large ribosomal subunit protein uL4 of Campylobacter lari (strain RM2100 / D67 / ATCC BAA-1060).